Consider the following 147-residue polypeptide: MVKSKSPKGIYAARKLRLKRLKFRRSQRKYKTKILKLKEKYDPLGGAPMARGIVLEKVGIESRQPNSAVRKCVRVQLVRNGRVVTAFVPGDGGVNFIDEHDEVIITGIGGTLGRSMGDLPGVRYKVIMVNGVSLDALYKGKKQKPVR.

It belongs to the universal ribosomal protein uS12 family. In terms of assembly, part of the 30S ribosomal subunit.

Its function is as follows. With S4 and S5 plays an important role in translational accuracy. Located at the interface of the 30S and 50S subunits. The sequence is that of Small ribosomal subunit protein uS12 from Saccharolobus solfataricus (strain ATCC 35092 / DSM 1617 / JCM 11322 / P2) (Sulfolobus solfataricus).